The primary structure comprises 358 residues: Alanine racemase (358 aa).

Lys-35 acts as the Proton acceptor; specific for D-alanine in catalysis. The residue at position 35 (Lys-35) is an N6-(pyridoxal phosphate)lysine. Arg-130 is a binding site for substrate. Tyr-255 serves as the catalytic Proton acceptor; specific for L-alanine. Met-303 provides a ligand contact to substrate.

The protein belongs to the alanine racemase family. Pyridoxal 5'-phosphate serves as cofactor.

The catalysed reaction is L-alanine = D-alanine. The protein operates within amino-acid biosynthesis; D-alanine biosynthesis; D-alanine from L-alanine: step 1/1. Its function is as follows. Catalyzes the interconversion of L-alanine and D-alanine. May also act on other amino acids. This is Alanine racemase (alr) from Shewanella sp. (strain ANA-3).